The primary structure comprises 212 residues: Adenylate kinase (212 aa).

Position 10-15 (10-15 (GAGKGT)) interacts with ATP. Positions 30-59 (AIGDIFRTIIKTSTSEAELINNYVKQGELI) are NMP. AMP contacts are provided by residues R36, 57–59 (ELI), 85–88 (GYPR), and Q92. Positions 122 to 160 (GRYSCKNCGKIYNRYFLQPKTDNVCDVCGSSTFDYRKDD) are LID. Residue R123 coordinates ATP. Residues C126 and C129 each contribute to the Zn(2+) site. 132-133 (IY) serves as a coordination point for ATP. Residues C146 and C149 each coordinate Zn(2+). 2 residues coordinate AMP: R157 and R168. K196 provides a ligand contact to ATP.

Belongs to the adenylate kinase family. Monomer.

It localises to the cytoplasm. It carries out the reaction AMP + ATP = 2 ADP. Its pathway is purine metabolism; AMP biosynthesis via salvage pathway; AMP from ADP: step 1/1. In terms of biological role, catalyzes the reversible transfer of the terminal phosphate group between ATP and AMP. Plays an important role in cellular energy homeostasis and in adenine nucleotide metabolism. The chain is Adenylate kinase from Rickettsia africae (strain ESF-5).